Here is a 503-residue protein sequence, read N- to C-terminus: Cytochrome P450 monooxygenase ecdH (503 aa).

A helical transmembrane segment spans residues 8 to 24; the sequence is TTLLCGVISSTLLLLLL. Residues Asn64, Asn324, and Asn413 are each glycosylated (N-linked (GlcNAc...) asparagine). Cys449 serves as a coordination point for heme.

This sequence belongs to the cytochrome P450 family. The cofactor is heme.

The protein localises to the membrane. Its pathway is antifungal biosynthesis. Functionally, cytochrome P450 monooxygenase; part of the gene cluster that mediates the biosynthesis of echinocandin B, a fungal lipidated cyclic hexapeptide that acts as an antifungal agent. Linoleoyl-AMP, produced by the fatty-acyl-AMP ligase ecdI, is transferred to the initiation carrier domain (T0) of ecdA. The linoleoyl-S-phosphopantetheinyl-T0 is sequentially extended with L-ornithine, L-threonine, L-proline, L-homotyrosine, L-threonine, and 4R-methyl-L-proline to form the linear hexapeptide. Thereafter, the terminal condensation (C7) performs macrocyclization of the NRPS product and the cyclic scaffold is released from ecdA. All six of the amino acid residues are hydroxylated, including 4R,5R-dihydroxy-L-ornithine, 4R-hydroxyl-L-proline, 3S,4S-dihydroxy-L-homotyrosine, and 3S-hydroxyl-4S-methyl-L-prolin. In the pathway, all the hydroxylation reactions are proposed to occur following completion of the cyclic peptide, so the unhydroxylated precursor produced by ecdA will undergo six rounds of hydroxylation. Five hydroxylase genes (ecdG, ecdH, ecdK, htyE and htyF) are embedded within the echinocandin B (ecd) and L-homotyrosine (hty) clusters. The sequence is that of Cytochrome P450 monooxygenase ecdH from Aspergillus rugulosus (Emericella rugulosa).